The chain runs to 169 residues: Peptide deformylase (169 aa).

2 residues coordinate Fe cation: cysteine 91 and histidine 133. Residue glutamate 134 is part of the active site. Histidine 137 lines the Fe cation pocket.

It belongs to the polypeptide deformylase family. Fe(2+) is required as a cofactor.

The catalysed reaction is N-terminal N-formyl-L-methionyl-[peptide] + H2O = N-terminal L-methionyl-[peptide] + formate. Its function is as follows. Removes the formyl group from the N-terminal Met of newly synthesized proteins. Requires at least a dipeptide for an efficient rate of reaction. N-terminal L-methionine is a prerequisite for activity but the enzyme has broad specificity at other positions. The chain is Peptide deformylase from Salmonella agona (strain SL483).